The sequence spans 78 residues: MFPIVEFCVSNLAQGSQEAKEILEKDPNLDVVEYGCLSYCGQCMQTMYALVNGEMVTANNPAELVENIYKFIDENELI.

The protein belongs to the UPF0349 family.

This is UPF0349 protein BLi03401/BL03152 from Bacillus licheniformis (strain ATCC 14580 / DSM 13 / JCM 2505 / CCUG 7422 / NBRC 12200 / NCIMB 9375 / NCTC 10341 / NRRL NRS-1264 / Gibson 46).